The chain runs to 421 residues: Histidine--tRNA ligase (421 aa).

This sequence belongs to the class-II aminoacyl-tRNA synthetase family. In terms of assembly, homodimer.

The protein localises to the cytoplasm. The catalysed reaction is tRNA(His) + L-histidine + ATP = L-histidyl-tRNA(His) + AMP + diphosphate + H(+). The polypeptide is Histidine--tRNA ligase (Francisella tularensis subsp. holarctica (strain OSU18)).